The chain runs to 216 residues: Pyrrolidone-carboxylate peptidase (216 aa).

Active-site residues include Glu80, Cys143, and His167.

It belongs to the peptidase C15 family. As to quaternary structure, homotetramer.

The protein localises to the cytoplasm. The catalysed reaction is Release of an N-terminal pyroglutamyl group from a polypeptide, the second amino acid generally not being Pro.. In terms of biological role, removes 5-oxoproline from various penultimate amino acid residues except L-proline. The polypeptide is Pyrrolidone-carboxylate peptidase (pcp) (Streptomyces coelicolor (strain ATCC BAA-471 / A3(2) / M145)).